We begin with the raw amino-acid sequence, 65 residues long: Putative antitoxin VapB7 (65 aa).

Belongs to the UPF0165 family.

Possibly the antitoxin component of a type II toxin-antitoxin (TA) system. Its cognate toxin is VapC7 (Potential). The sequence is that of Putative antitoxin VapB7 (vapB7) from Archaeoglobus fulgidus (strain ATCC 49558 / DSM 4304 / JCM 9628 / NBRC 100126 / VC-16).